Here is a 283-residue protein sequence, read N- to C-terminus: Methylamine utilization protein MauF (283 aa).

Helical transmembrane passes span 37–57 (FALMLSAVAAGLAGGAMLHSA), 58–78 (MSATSALTGLFIVLALAGGFL), 116–136 (GYAIGAVVLGGALGMAGWLLF), 143–163 (YMVAGMAVLALGYGAHQFGFM), 187–207 (IGLLYGYALGMNYLTYVQTPI), 210–230 (IVTGVALFCGDVKTAIVIIGI), and 263–283 (VEVDGFLLLSVGSAALMLLVL).

It localises to the cell membrane. The protein operates within one-carbon metabolism; methylamine degradation. The polypeptide is Methylamine utilization protein MauF (mauF) (Methylobacillus flagellatus (strain ATCC 51484 / DSM 6875 / VKM B-1610 / KT)).